A 129-amino-acid chain; its full sequence is MRHRKIGRRFNKSATHVKAMLKNMVCSLFRYEMIKTTVSKAKELRRVAEPLITCAKIDSVANRRLVFSRIRDNKIVFKLFRDLGPHFLGQFGGYTRILRCGFRSGDQAPMAYIQLINRVKNKKELVYKK.

The protein belongs to the bacterial ribosomal protein bL17 family. Part of the 50S ribosomal subunit. Contacts protein L32.

The polypeptide is Large ribosomal subunit protein bL17 (Buchnera aphidicola subsp. Baizongia pistaciae (strain Bp)).